A 502-amino-acid chain; its full sequence is Protein IWS1 homolog 1 (502 aa).

The segment covering 1–12 (MGFEDDPYRDVD) has biased composition (basic and acidic residues). Disordered stretches follow at residues 1-61 (MGFE…DNDK) and 87-208 (DEDV…DEDE). 3 stretches are compositionally biased toward acidic residues: residues 13–22 (GEPIVDFDDF), 34–49 (QDFD…DWDG), and 87–97 (DEDVDDAEFDE). Basic and acidic residues-rich tracts occupy residues 138 to 151 (NRGE…DEMW) and 181 to 194 (PSER…DRSP). Tyrosine 185 carries the post-translational modification Phosphotyrosine. A TFIIS N-terminal domain is found at 287–370 (TLLKNWLEPL…DKWSRPIFNK (84 aa)). The disordered stretch occupies residues 385 to 434 (VPYRRPPVKKPSNKATMESRDGDFDLEIRERKTGLTSGQSSRGDRQMTMR). The span at 401-417 (MESRDGDFDLEIRERKT) shows a compositional bias: basic and acidic residues.

This sequence belongs to the IWS1 family. In terms of assembly, interacts with BZR2/BES1 and SPT6 (via N-terminus). Interacts with ASHH2/SDG8.

It localises to the nucleus. Transcription factor involved in RNA polymerase II (RNAPII) transcription regulation. Involved in transcription elongation. May function at post-recruitment and elongation steps of transcription. May be recruited by BZR2/BES1 to target genes and promote their expression during transcription elongation process. Required for brassinosteroid (BR)-induced gene expression. Required the for regulation of numerous nitrogen-responsive genes in roots. Acts in roots to repress NRT2.1 transcription in response to high nitrogen supply. This repression is associated with an IWS1-dependent increase of trimethylation on 'Lys-27' H3K27me3 at the NRT2.1 locus. The protein is Protein IWS1 homolog 1 of Arabidopsis thaliana (Mouse-ear cress).